Consider the following 575-residue polypeptide: Sulfite reductase [NADPH] hemoprotein beta-component (575 aa).

[4Fe-4S] cluster is bound by residues Cys-440, Cys-446, Cys-485, and Cys-489. A siroheme-binding site is contributed by Cys-489.

The protein belongs to the nitrite and sulfite reductase 4Fe-4S domain family. As to quaternary structure, alpha(8)-beta(8). The alpha component is a flavoprotein, the beta component is a hemoprotein. The cofactor is siroheme. [4Fe-4S] cluster is required as a cofactor.

The enzyme catalyses hydrogen sulfide + 3 NADP(+) + 3 H2O = sulfite + 3 NADPH + 4 H(+). It participates in sulfur metabolism; hydrogen sulfide biosynthesis; hydrogen sulfide from sulfite (NADPH route): step 1/1. Its function is as follows. Component of the sulfite reductase complex that catalyzes the 6-electron reduction of sulfite to sulfide. This is one of several activities required for the biosynthesis of L-cysteine from sulfate. The chain is Sulfite reductase [NADPH] hemoprotein beta-component from Chromohalobacter salexigens (strain ATCC BAA-138 / DSM 3043 / CIP 106854 / NCIMB 13768 / 1H11).